The chain runs to 353 residues: MTDIITLENIDVTFKQGKQIVNAVKNVNLNVEKGDIFGVVGYSGAGKSTLVRTINLLQKPTSGTVKVNGTLLFADNKQQISNKELQKQRRSIGMIFQHFNLLNETTVVDNVAFALRHSSLSDKEIEEKALNLLKLVGLEDKAKFYPIQLSGGEQQRVAIARALANDPEILISDESTSALDPRTTNQILDLLKELNAKLGLTIVLITHEMDAVKRIANKIAIMEHGVIIEKGKLRDVYLRPKEELSRQFVGGSLAAIETLKAFNLGNLSPDQKLFQLVFSAANVTKSIILELYKELGLDVSMLYGNIEVLESEPVGTMFILAKGEPDKLDKVADYLKKENVEVTRIDERGIWND.

Residues 7–249 enclose the ABC transporter domain; sequence LENIDVTFKQ…PKEELSRQFV (243 aa). 41 to 48 is a binding site for ATP; the sequence is GYSGAGKS.

This sequence belongs to the ABC transporter superfamily. Methionine importer (TC 3.A.1.24) family. The complex is composed of two ATP-binding proteins (MetN), two transmembrane proteins (MetI) and a solute-binding protein (MetQ).

The protein localises to the cell membrane. It carries out the reaction L-methionine(out) + ATP + H2O = L-methionine(in) + ADP + phosphate + H(+). The enzyme catalyses D-methionine(out) + ATP + H2O = D-methionine(in) + ADP + phosphate + H(+). In terms of biological role, part of the ABC transporter complex MetNIQ involved in methionine import. Responsible for energy coupling to the transport system. The sequence is that of Methionine import ATP-binding protein MetN from Ligilactobacillus salivarius (strain UCC118) (Lactobacillus salivarius).